Consider the following 214-residue polypeptide: Uridine kinase (214 aa).

G15–S22 contacts ATP.

The protein belongs to the uridine kinase family.

The protein localises to the cytoplasm. It catalyses the reaction uridine + ATP = UMP + ADP + H(+). The catalysed reaction is cytidine + ATP = CMP + ADP + H(+). The protein operates within pyrimidine metabolism; CTP biosynthesis via salvage pathway; CTP from cytidine: step 1/3. It functions in the pathway pyrimidine metabolism; UMP biosynthesis via salvage pathway; UMP from uridine: step 1/1. The sequence is that of Uridine kinase from Aeromonas salmonicida (strain A449).